The chain runs to 201 residues: Ras-related protein Rab-9A (201 aa).

Residue alanine 2 is modified to N-acetylalanine. GDP is bound at residue glycine 17. Residues glycine 17, valine 18, glycine 19, lysine 20, serine 21, serine 22, threonine 34, histidine 38, and threonine 39 each coordinate GTP. Residues glycine 19, lysine 20, serine 21, and serine 22 each coordinate GDP. Position 21 (serine 21) interacts with Mg(2+). The Switch 1 signature appears at 31-42 (KFDTQLFHTIGV). Mg(2+) is bound by residues threonine 39 and aspartate 62. The Switch 2 motif lies at 64 to 78 (AGQERFRSLRTPFYR). The GTP site is built by glycine 65, asparagine 124, lysine 125, aspartate 127, alanine 155, and lysine 156. GDP-binding residues include asparagine 124, lysine 125, aspartate 127, alanine 155, and lysine 156. A Phosphoserine modification is found at serine 179. Threonine 187 bears the Phosphothreonine mark. S-geranylgeranyl cysteine attachment occurs at residues cysteine 200 and cysteine 201.

This sequence belongs to the small GTPase superfamily. Rab family. Interacts (preferentially in its GTP-bound form) with GCC2 (via its GRIP domain). Interacts (GTP-bound form) with SGSM1; the GDP-bound form has much lower affinity for SGSM1. Interacts with SGSM2. The GTP-bound form but not the GDP-bound form interacts with HPS4 and BLOC-3 complex (heterodimer of HPS1 and HPS4) but does not interact with HPS1 alone. Interacts (GTP-bound form) with NDE1; two RAB9A-GTP molecules lie on the opposite sides of the NDE1 homodimer; the interaction leads to RAB9A-dynein motor tethering. Interacts (GTP-bound form) with NDEL1. Requires Mg(2+) as cofactor.

Its subcellular location is the cell membrane. It is found in the endoplasmic reticulum membrane. The protein resides in the golgi apparatus membrane. It localises to the late endosome. The protein localises to the cytoplasmic vesicle. Its subcellular location is the phagosome membrane. It is found in the phagosome. The protein resides in the cytoplasmic vesicle membrane. It localises to the melanosome. The catalysed reaction is GTP + H2O = GDP + phosphate + H(+). Regulated by guanine nucleotide exchange factors (GEFs) which promote the exchange of bound GDP for free GTP. Regulated by GTPase activating proteins (GAPs) which increase the GTP hydrolysis activity. Inhibited by GDP dissociation inhibitors (GDIs). Its function is as follows. The small GTPases Rab are key regulators of intracellular membrane trafficking, from the formation of transport vesicles to their fusion with membranes. Rabs cycle between an inactive GDP-bound form and an active GTP-bound form that is able to recruit to membranes different sets of downstream effectors directly responsible for vesicle formation, movement, tethering and fusion. RAB9A is involved in the transport of proteins between the endosomes and the trans-Golgi network (TGN). Specifically uses NDE1/NDEL1 as an effector to interact with the dynein motor complex in order to control retrograde trafficking of RAB9-associated late endosomes to the TGN. Involved in the recruitment of SGSM2 to melanosomes and is required for the proper trafficking of melanogenic enzymes TYR, TYRP1 and DCT/TYRP2 to melanosomes in melanocytes. This Homo sapiens (Human) protein is Ras-related protein Rab-9A.